Here is a 220-residue protein sequence, read N- to C-terminus: Large ribosomal subunit protein uL16 (220 aa).

The protein belongs to the universal ribosomal protein uL16 family. Component of the small ribosomal subunit. Mature ribosomes consist of a small (40S) and a large (60S) subunit. The 40S subunit contains about 33 different proteins and 1 molecule of RNA (18S). The 60S subunit contains about 49 different proteins and 3 molecules of RNA (25S, 5.8S and 5S).

The chain is Large ribosomal subunit protein uL16 (RPL10) from Euphorbia esula (Leafy spurge).